We begin with the raw amino-acid sequence, 143 residues long: Small ribosomal subunit protein uS12 (143 aa).

Positions 1–19 are enriched in basic residues; that stretch reads MGKPRGIRTARKHVNHRRE. The interval 1–21 is disordered; sequence MGKPRGIRTARKHVNHRREQR. P62 is modified (hydroxyproline).

Belongs to the universal ribosomal protein uS12 family. In terms of assembly, component of the 40S small ribosomal subunit.

The protein localises to the cytoplasm. It is found in the cytosol. Its subcellular location is the rough endoplasmic reticulum. The polypeptide is Small ribosomal subunit protein uS12 (RpS23) (Papilio dardanus (African swallowtail butterfly)).